We begin with the raw amino-acid sequence, 426 residues long: Metacaspase-1B (426 aa).

The span at Met1–Tyr14 shows a compositional bias: gly residues. The tract at residues Met1 to Pro111 is disordered. A compositionally biased stretch (low complexity) spans Gln21–Pro68. Residues His217 and Cys273 contribute to the active site.

This sequence belongs to the peptidase C14B family.

Its function is as follows. Involved in cell death (apoptosis). The protein is Metacaspase-1B (casB) of Neurospora crassa (strain ATCC 24698 / 74-OR23-1A / CBS 708.71 / DSM 1257 / FGSC 987).